The sequence spans 131 residues: Small ribosomal subunit protein uS8 (131 aa).

It belongs to the universal ribosomal protein uS8 family. Part of the 30S ribosomal subunit. Contacts proteins S5 and S12.

One of the primary rRNA binding proteins, it binds directly to 16S rRNA central domain where it helps coordinate assembly of the platform of the 30S subunit. The protein is Small ribosomal subunit protein uS8 of Desulforudis audaxviator (strain MP104C).